The chain runs to 301 residues: 33 kDa chaperonin (301 aa).

Cystine bridges form between Cys-240/Cys-242 and Cys-273/Cys-276.

The protein belongs to the HSP33 family. Under oxidizing conditions two disulfide bonds are formed involving the reactive cysteines. Under reducing conditions zinc is bound to the reactive cysteines and the protein is inactive.

It is found in the cytoplasm. In terms of biological role, redox regulated molecular chaperone. Protects both thermally unfolding and oxidatively damaged proteins from irreversible aggregation. Plays an important role in the bacterial defense system toward oxidative stress. This Rippkaea orientalis (strain PCC 8801 / RF-1) (Cyanothece sp. (strain PCC 8801)) protein is 33 kDa chaperonin.